Consider the following 364-residue polypeptide: DNA replication and repair protein RecF (364 aa).

30-37 (GKNAQGKT) is a binding site for ATP.

This sequence belongs to the RecF family.

The protein localises to the cytoplasm. Its function is as follows. The RecF protein is involved in DNA metabolism; it is required for DNA replication and normal SOS inducibility. RecF binds preferentially to single-stranded, linear DNA. It also seems to bind ATP. The sequence is that of DNA replication and repair protein RecF from Geotalea uraniireducens (strain Rf4) (Geobacter uraniireducens).